The following is a 497-amino-acid chain: Arginine/ornithine antiporter ArcD2 (497 aa).

Transmembrane regions (helical) follow at residues 8 to 28 (GISL…GGVF), 41 to 61 (GGVV…VLSF), 88 to 108 (FLSG…FAVL), 127 to 147 (SLTI…MLLV), 160 to 180 (IVMI…IILF), 220 to 240 (IKGS…ATMM), 255 to 275 (VIGL…PYGY), 297 to 317 (VGGW…LGAW), 354 to 374 (LLIT…VANA), 378 to 398 (FIYM…AYLF), 406 to 426 (SVKN…ALYL), 429 to 449 (WQYV…FIGA), and 462 to 482 (WLGM…LICG).

It belongs to the amino acid-polyamine-organocation (APC) superfamily. Basic amino acid/polyamine antiporter (APA) (TC 2.A.3.2) family.

It is found in the cell membrane. The catalysed reaction is L-ornithine(in) + L-arginine(out) = L-ornithine(out) + L-arginine(in). Its function is as follows. Catalyzes electroneutral exchange between L-arginine and L-ornithine. Can also efficiently translocate L-alanine. May function in vivo as a L-arginine/L-alanine exchanger in a pathway together with the arcT gene, which is found adjacent to the arcD2 gene in the ADI gene cluster. This Lactococcus lactis subsp. cremoris (strain MG1363) protein is Arginine/ornithine antiporter ArcD2.